A 125-amino-acid chain; its full sequence is Fluoride-specific ion channel FluC (125 aa).

4 helical membrane passes run 4 to 24 (PLLA…LLAV), 36 to 56 (GTLL…AWFA), 68 to 88 (LITT…LEVV), and 100 to 120 (VISV…GFWL). 2 residues coordinate Na(+): G75 and T78.

Belongs to the fluoride channel Fluc/FEX (TC 1.A.43) family.

Its subcellular location is the cell inner membrane. The enzyme catalyses fluoride(in) = fluoride(out). Its activity is regulated as follows. Na(+) is not transported, but it plays an essential structural role and its presence is essential for fluoride channel function. In terms of biological role, fluoride-specific ion channel. Important for reducing fluoride concentration in the cell, thus reducing its toxicity. The chain is Fluoride-specific ion channel FluC from Erwinia tasmaniensis (strain DSM 17950 / CFBP 7177 / CIP 109463 / NCPPB 4357 / Et1/99).